A 666-amino-acid chain; its full sequence is Probable potassium transport system protein Kup (666 aa).

12 helical membrane passes run 16-36 (GFIIALGIVYGDIGTSPLYTM), 58-78 (ISLIIWTLTLITTIKYVLVAL), 99-119 (TPWLIVPAVIGGATLLSDGAL), 141-161 (IFQNQSNVIFATLFILLLLFA), 167-187 (TGVIGKLFGPIMFIWFAFLGI), 221-241 (IFILGSIFLATTGAEALYSDL), 253-273 (WPFVKVAIILSYCGQGAWILA), 292-312 (FTMHVVILATLAAIIASQALI), 343-363 (TYIPVINWFLFAITTSIVLLF), 373-393 (YGLAITITMLMTTILLSFFLI), 402-422 (VLLMMIFFGILEGIFFLASAV), and 424-444 (FMHGGYVVVIIAVAIIFIMII).

Belongs to the HAK/KUP transporter (TC 2.A.72) family.

The protein localises to the cell membrane. The enzyme catalyses K(+)(in) + H(+)(in) = K(+)(out) + H(+)(out). In terms of biological role, transport of potassium into the cell. Likely operates as a K(+):H(+) symporter. This is Probable potassium transport system protein Kup from Streptococcus agalactiae serotype III (strain NEM316).